Reading from the N-terminus, the 718-residue chain is Exostosin-2 (718 aa).

The Cytoplasmic segment spans residues 1 to 25 (MCASVKYNIRGPALIPRMKTKHRIY). Residues 26-46 (YITLFSIVLLGLIATGMFQFW) form a helical; Signal-anchor for type II membrane protein membrane-spanning segment. Topologically, residues 47–718 (PHSIESSNDW…LKSFPNIGSL (672 aa)) are lumenal. Cystine bridges form between C85-C90, C96-C151, C286-C300, and C318-C339. The N-linked (GlcNAc...) asparagine glycan is linked to N288. L461, R465, N490, and N517 together coordinate UDP. Positions 465, 490, 517, 522, 538, 539, and 540 each coordinate UDP-N-acetyl-alpha-D-glucosamine. The UDP site is built by D538 and D539. D540 provides a ligand contact to Mn(2+). Y582 and S584 together coordinate a protein. A disulfide bridge links C626 with C676. UDP-N-acetyl-alpha-D-glucosamine contacts are provided by E627 and D628. An N-linked (GlcNAc...) asparagine glycan is attached at N637. Positions 651 and 653 each coordinate a protein. R673 provides a ligand contact to UDP-N-acetyl-alpha-D-glucosamine.

Belongs to the glycosyltransferase 47 family. As to quaternary structure, part of the heparan sulfate polymerase, a dimeric complex composed of EXT1 and EXT2. Could also form homooligomeric complexes. Interacts with NDST1. Interacts with GALNT5. Requires Mn(2+) as cofactor. In terms of processing, N-glycosylated at Asn-637. Post-translationally, a soluble form is generated by proteolytic processing. As to expression, widely expressed.

It localises to the golgi apparatus membrane. Its subcellular location is the golgi apparatus. It is found in the cis-Golgi network membrane. The protein resides in the endoplasmic reticulum membrane. The protein localises to the secreted. The enzyme catalyses 3-O-{[(1-&gt;4)-beta-D-GlcA-(1-&gt;4)-alpha-D-GlcNAc](n)-(1-&gt;4)-beta-D-GlcA-(1-&gt;3)-beta-D-Gal-(1-&gt;3)-beta-D-Gal-(1-&gt;4)-beta-D-Xyl}-L-seryl-[protein] + UDP-N-acetyl-alpha-D-glucosamine = 3-O-{alpha-D-GlcNAc-[(1-&gt;4)-beta-D-GlcA-(1-&gt;4)-alpha-D-GlcNAc](n)-(1-&gt;4)-beta-D-GlcA-(1-&gt;3)-beta-D-Gal-(1-&gt;3)-beta-D-Gal-(1-&gt;4)-beta-D-Xyl}-L-seryl-[protein] + UDP + H(+). Its pathway is protein modification; protein glycosylation. In terms of biological role, glycosyltransferase forming with EXT1 the heterodimeric heparan sulfate polymerase which catalyzes the elongation of the heparan sulfate glycan backbone. Glycan backbone extension consists in the alternating transfer of (1-&gt;4)-beta-D-GlcA and (1-&gt;4)-alpha-D-GlcNAc residues from their respective UDP-sugar donors. Both EXT1 and EXT2 are required for the full activity of the polymerase since EXT1 bears the N-acetylglucosaminyl-proteoglycan 4-beta-glucuronosyltransferase activity within the complex while EXT2 carries the glucuronosyl-N-acetylglucosaminyl-proteoglycan 4-alpha-N-acetylglucosaminyltransferase activity. Heparan sulfate proteoglycans are ubiquitous components of the extracellular matrix and play an important role in tissue homeostasis and signaling. In Homo sapiens (Human), this protein is Exostosin-2.